A 759-amino-acid chain; its full sequence is Mitogen-activated protein kinase kinase kinase 1a (759 aa).

3 stretches are compositionally biased toward basic and acidic residues: residues 1–17, 25–36, and 52–64; these read MIEE…DRGS, SFEDKGSSHDWK, and AKKD…KVDS. 4 disordered regions span residues 1–90, 122–160, 165–184, and 195–239; these read MIEE…NLSK, LGIE…SHDF, SRVD…LAPM, and RKHR…PDPL. A compositionally biased stretch (low complexity) spans 72 to 85; that stretch reads VHSTSSPRLSPASS. Residues 426–679 form the Protein kinase domain; it reads WAKGEFLGSG…CDMLLAHPFI (254 aa). ATP-binding positions include 432 to 440 and K454; that span reads LGSGTFGSV. The active-site Proton acceptor is the D549.

Belongs to the protein kinase superfamily. STE Ser/Thr protein kinase family. MAP kinase kinase kinase subfamily.

Its subcellular location is the cell membrane. It catalyses the reaction L-seryl-[protein] + ATP = O-phospho-L-seryl-[protein] + ADP + H(+). The enzyme catalyses L-threonyl-[protein] + ATP = O-phospho-L-threonyl-[protein] + ADP + H(+). Functionally, the CERK1, MEKK1a/b, MKK1a/b/c and MPK4a/b proteins are involved in pathogen defense. The pathway induces rapid growth inhibition, cell wall depositions and accumulation of defense-related transcripts. This protein is required for responses to chitin and acts redundantly with MEKK1b. This is Mitogen-activated protein kinase kinase kinase 1a from Physcomitrium patens (Spreading-leaved earth moss).